The primary structure comprises 323 residues: MASLRELRSRIRGVNSIKKITKAQELIATSRISKAQARVAAAKPYAEEITKVLGELASASKNLSHPLLTERPNPRRAAVLVITSDSGMCGGYNSNVLKRAEELMTTLRNEGKEPVLYVMGAKGLTYYTFRNRPFVSAWTGFSQQPKYTDASAACRHLVDAFMVGSDGEVPHPNGTGDIAGVDELHIVYTRFVSMLTQTPEVRRLAPIQVSFVDENFDMGEDSFSDSPTAEVQAQYEFEPDADVLLAALLPKYVNTRIYASLLEAAASESAARRTAMKAATDNANELASVLQREANSVRQAQITQEISEIVGGVNALASSSDRD.

The protein belongs to the ATPase gamma chain family. In terms of assembly, F-type ATPases have 2 components, CF(1) - the catalytic core - and CF(0) - the membrane proton channel. CF(1) has five subunits: alpha(3), beta(3), gamma(1), delta(1), epsilon(1). CF(0) has three main subunits: a, b and c.

The protein resides in the cell membrane. Its function is as follows. Produces ATP from ADP in the presence of a proton gradient across the membrane. The gamma chain is believed to be important in regulating ATPase activity and the flow of protons through the CF(0) complex. The chain is ATP synthase gamma chain from Nocardia farcinica (strain IFM 10152).